The primary structure comprises 227 residues: DNA mismatch repair protein MutH (227 aa).

It belongs to the MutH family.

Its subcellular location is the cytoplasm. Sequence-specific endonuclease that cleaves unmethylated GATC sequences. It is involved in DNA mismatch repair. This is DNA mismatch repair protein MutH from Vibrio vulnificus (strain CMCP6).